The chain runs to 736 residues: 1,4-alpha-glucan branching enzyme GlgB 2 (736 aa).

Catalysis depends on Asp415, which acts as the Nucleophile. The Proton donor role is filled by Glu468.

It belongs to the glycosyl hydrolase 13 family. GlgB subfamily. As to quaternary structure, monomer.

It carries out the reaction Transfers a segment of a (1-&gt;4)-alpha-D-glucan chain to a primary hydroxy group in a similar glucan chain.. The protein operates within glycan biosynthesis; glycogen biosynthesis. In terms of biological role, catalyzes the formation of the alpha-1,6-glucosidic linkages in glycogen by scission of a 1,4-alpha-linked oligosaccharide from growing alpha-1,4-glucan chains and the subsequent attachment of the oligosaccharide to the alpha-1,6 position. This chain is 1,4-alpha-glucan branching enzyme GlgB 2, found in Rhizobium johnstonii (strain DSM 114642 / LMG 32736 / 3841) (Rhizobium leguminosarum bv. viciae).